The following is a 153-amino-acid chain: Transcriptional repressor NrdR (153 aa).

A zinc finger lies at 3-34; that stretch reads CPFCGYEDTRVLDSRELSEGRAIRRRRECPQC. Positions 49 to 139 constitute an ATP-cone domain; that stretch reads ITVIKKDGRR…VYKDFREIDQ (91 aa).

The protein belongs to the NrdR family. It depends on Zn(2+) as a cofactor.

Its function is as follows. Negatively regulates transcription of bacterial ribonucleotide reductase nrd genes and operons by binding to NrdR-boxes. In Fervidobacterium nodosum (strain ATCC 35602 / DSM 5306 / Rt17-B1), this protein is Transcriptional repressor NrdR.